The primary structure comprises 432 residues: MEKEISKVSRIKGELRVPSDKSISHRSIILTSLADGVSVVKNFLKAGDTLTTLNVYRKLGVSIIEEKGVLKIKGVNLKGFKEPEDILDMGNSGTTTRLTLGLLSGQEFFSALTGDDSLRQRPMGRVADPLRSMGAKIDGRQDGKLLPLSVRGSSLKGIQFYNKRSSAQVKSALLIAGLLAEGKTKVTEPYISRDHTEKMLDAMGADIHIERDDEYSVTISGSKKLEGIEIDVPADPSSAAFFAAAAVLIPDSELLLKDVLINPTRDGFFRKLKEMGGDIRYTNIREKAKEPVADIYVRYSPDLKGIRIKKEDVPSMVDEIPLLSIVATQAEGETIITGAEELRVKESDRIKAVVENLKNLGIDVEELPDGMVIKGKQKVKGGVVDSYKDHRIAMGFSILGLISEEGIKIKDADSVFISYPEFYEHLERIISN.

3-phosphoshikimate-binding residues include Lys-21, Ser-22, and Arg-26. A phosphoenolpyruvate-binding site is contributed by Lys-21. Positions 93 and 121 each coordinate phosphoenolpyruvate. Residues Ser-166, Gln-168, Asp-318, and Lys-345 each contribute to the 3-phosphoshikimate site. Gln-168 is a phosphoenolpyruvate binding site. Asp-318 acts as the Proton acceptor in catalysis. Phosphoenolpyruvate contacts are provided by Arg-349 and Arg-391.

It belongs to the EPSP synthase family. In terms of assembly, monomer.

It is found in the cytoplasm. It catalyses the reaction 3-phosphoshikimate + phosphoenolpyruvate = 5-O-(1-carboxyvinyl)-3-phosphoshikimate + phosphate. The protein operates within metabolic intermediate biosynthesis; chorismate biosynthesis; chorismate from D-erythrose 4-phosphate and phosphoenolpyruvate: step 6/7. In terms of biological role, catalyzes the transfer of the enolpyruvyl moiety of phosphoenolpyruvate (PEP) to the 5-hydroxyl of shikimate-3-phosphate (S3P) to produce enolpyruvyl shikimate-3-phosphate and inorganic phosphate. In Persephonella marina (strain DSM 14350 / EX-H1), this protein is 3-phosphoshikimate 1-carboxyvinyltransferase.